We begin with the raw amino-acid sequence, 366 residues long: Chorismate synthase (366 aa).

Arginine 48 and arginine 54 together coordinate NADP(+). Residues 125 to 127 (RSS), 241 to 242 (NA), glycine 285, 300 to 304 (KPTSS), and arginine 326 each bind FMN.

Belongs to the chorismate synthase family. As to quaternary structure, homotetramer. The cofactor is FMNH2.

The catalysed reaction is 5-O-(1-carboxyvinyl)-3-phosphoshikimate = chorismate + phosphate. The protein operates within metabolic intermediate biosynthesis; chorismate biosynthesis; chorismate from D-erythrose 4-phosphate and phosphoenolpyruvate: step 7/7. In terms of biological role, catalyzes the anti-1,4-elimination of the C-3 phosphate and the C-6 proR hydrogen from 5-enolpyruvylshikimate-3-phosphate (EPSP) to yield chorismate, which is the branch point compound that serves as the starting substrate for the three terminal pathways of aromatic amino acid biosynthesis. This reaction introduces a second double bond into the aromatic ring system. The protein is Chorismate synthase of Cereibacter sphaeroides (strain ATCC 17029 / ATH 2.4.9) (Rhodobacter sphaeroides).